The chain runs to 444 residues: Probable glycine dehydrogenase (decarboxylating) subunit 1 (444 aa).

It belongs to the GcvP family. N-terminal subunit subfamily. In terms of assembly, the glycine cleavage system is composed of four proteins: P, T, L and H. In this organism, the P 'protein' is a heterodimer of two subunits.

It catalyses the reaction N(6)-[(R)-lipoyl]-L-lysyl-[glycine-cleavage complex H protein] + glycine + H(+) = N(6)-[(R)-S(8)-aminomethyldihydrolipoyl]-L-lysyl-[glycine-cleavage complex H protein] + CO2. In terms of biological role, the glycine cleavage system catalyzes the degradation of glycine. The P protein binds the alpha-amino group of glycine through its pyridoxal phosphate cofactor; CO(2) is released and the remaining methylamine moiety is then transferred to the lipoamide cofactor of the H protein. The chain is Probable glycine dehydrogenase (decarboxylating) subunit 1 from Prosthecochloris aestuarii (strain DSM 271 / SK 413).